The following is a 903-amino-acid chain: Protein translocase subunit SecA (903 aa).

ATP-binding positions include glutamine 89, 107 to 111, and aspartate 502; that span reads GEGKT. Cysteine 887, cysteine 889, cysteine 898, and histidine 899 together coordinate Zn(2+).

This sequence belongs to the SecA family. In terms of assembly, monomer and homodimer. Part of the essential Sec protein translocation apparatus which comprises SecA, SecYEG and auxiliary proteins SecDF-YajC and YidC. It depends on Zn(2+) as a cofactor.

The protein localises to the cell inner membrane. Its subcellular location is the cytoplasm. It catalyses the reaction ATP + H2O + cellular proteinSide 1 = ADP + phosphate + cellular proteinSide 2.. Part of the Sec protein translocase complex. Interacts with the SecYEG preprotein conducting channel. Has a central role in coupling the hydrolysis of ATP to the transfer of proteins into and across the cell membrane, serving both as a receptor for the preprotein-SecB complex and as an ATP-driven molecular motor driving the stepwise translocation of polypeptide chains across the membrane. The sequence is that of Protein translocase subunit SecA from Jannaschia sp. (strain CCS1).